Consider the following 240-residue polypeptide: uncharacterized protein (240 aa).

The Proton acceptor role is filled by Asp66. Residue Asp129 is part of the active site. His131 acts as the Proton acceptor in catalysis.

It belongs to the glucosamine/galactosamine-6-phosphate isomerase family.

This is an uncharacterized protein from Escherichia coli (strain K12).